The primary structure comprises 571 residues: MRTSQYLLATQKETPADAVVISHQLMLRAGMIRKLASGLYTWLPMGLRVMRKVEAVVREEMNAAGALEVLMPSIQPAELWQESGRWEQYGPELLRLKDRHQRDFCVGPTHEEVITDLARNELSSYKQLPLNLYQIQTKFRDEIRPRFGLMRGREFIMKDAYSFHADQASLQETYDRMHQAYSNVFTRLGLDFRPVQADTGSIGGSYSHEFHVLAESGEDDVIFSDSSDYAANIEKAEAIPRETVRPAPTEELRLVDTPNAKTIAQLVENHGLPIEKTVKTLIVRGAEEGKLIALIVRGDHELNEIKATKLEQVADPLVMATEAELRDAIGAGAGSLGPLNLPLEIIIDRSVALMSDFGIGANIDDKHYFGVNWERDLPVPQVADLRNVVEGDPSPDGQGTLVIKRGIEVGHIFQLGTKYSEALKCQVLGENGKPVVLSMGCYGIGVSRVVAAAIEQSYDDKGIIWNDALAPFQIALVPLRYETDVVREATDKLYAELTAAGYEVLLDDRDKKTSPGIKFADMELIGIPHRIVVSDRGLAEGNLEYKHRTEQDAQALPLNEVLTFLQARVRR.

It belongs to the class-II aminoacyl-tRNA synthetase family. ProS type 1 subfamily. In terms of assembly, homodimer.

Its subcellular location is the cytoplasm. It catalyses the reaction tRNA(Pro) + L-proline + ATP = L-prolyl-tRNA(Pro) + AMP + diphosphate. Functionally, catalyzes the attachment of proline to tRNA(Pro) in a two-step reaction: proline is first activated by ATP to form Pro-AMP and then transferred to the acceptor end of tRNA(Pro). As ProRS can inadvertently accommodate and process non-cognate amino acids such as alanine and cysteine, to avoid such errors it has two additional distinct editing activities against alanine. One activity is designated as 'pretransfer' editing and involves the tRNA(Pro)-independent hydrolysis of activated Ala-AMP. The other activity is designated 'posttransfer' editing and involves deacylation of mischarged Ala-tRNA(Pro). The misacylated Cys-tRNA(Pro) is not edited by ProRS. This Pseudomonas putida (strain ATCC 47054 / DSM 6125 / CFBP 8728 / NCIMB 11950 / KT2440) protein is Proline--tRNA ligase.